Reading from the N-terminus, the 638-residue chain is Chaperone protein DnaK 2 (638 aa).

Residue threonine 199 is modified to Phosphothreonine; by autocatalysis. The disordered stretch occupies residues 604 to 626 (AKEQAQSAPEGAQEADAAPADDV). The span at 613-624 (EGAQEADAAPAD) shows a compositional bias: low complexity.

It belongs to the heat shock protein 70 family.

In terms of biological role, acts as a chaperone. In Colwellia psychrerythraea (strain 34H / ATCC BAA-681) (Vibrio psychroerythus), this protein is Chaperone protein DnaK 2.